We begin with the raw amino-acid sequence, 374 residues long: MLHFLSMLVLLVQPLGDLGAEMKTLSQRSITNTCTLVLCSPTENGLPGRDGRDGREGPRGEKGDPGLPGPMGLSGLPGPRGPVGPKGENGSAGEPGPKGERGLVGPPGSPGISGPAGKEGPSGKQGNIGPQGKPGPKGEAGPKGEVGAPGMQGSAGAKGPAGPKGERGAPGEQGAPGNAGAAGPAGPAGPQGAPGSRGPPGLKGDRGAPGDRGIKGESGLPDSAALRQQMEALNGKLQRLEAAFSRYKKAALFPDGQSVGDKIFRAANSEEPFEDAKEMCRQAGGQLASPRSATENAAVQQLVTAHSKAAFLSMTDVGTEGKFTYPTGEALVYSNWAPGEPNNNGGAENCVEIFTNGQWNDKACGEQRLVICEF.

The first 19 residues, 1 to 19 (MLHFLSMLVLLVQPLGDLG), serve as a signal peptide directing secretion. S-nitrosocysteine is present on residues cysteine 34 and cysteine 39. The tract at residues 40–221 (SPTENGLPGR…RGIKGESGLP (182 aa)) is disordered. In terms of domain architecture, Collagen-like spans 45–221 (GLPGRDGRDG…RGIKGESGLP (177 aa)). Basic and acidic residues predominate over residues 49-64 (RDGRDGREGPRGEKGD). Proline 77 carries the hydroxyproline modification. A 5-hydroxylysine modification is found at lysine 86. A glycan (N-linked (GlcNAc...) asparagine) is linked at asparagine 89. Hydroxyproline is present on proline 95. The residue at position 98 (lysine 98) is a 5-hydroxylysine. The residue at position 109 (serine 109) is a Phosphoserine. 2 stretches are compositionally biased toward low complexity: residues 137–163 (KGEAGPKGEVGAPGMQGSAGAKGPAGP) and 170–200 (PGEQGAPGNAGAAGPAGPAGPQGAPGSRGPP). Residues proline 170 and proline 176 each carry the hydroxyproline modification. Residues 203–215 (KGDRGAPGDRGIK) show a composition bias toward basic and acidic residues. A coiled-coil region spans residues 222 to 253 (DSAALRQQMEALNGKLQRLEAAFSRYKKAALF). A C-type lectin domain is found at 259-374 (VGDKIFRAAN…GEQRLVICEF (116 aa)). Disulfide bonds link cysteine 280/cysteine 372 and cysteine 350/cysteine 364.

Belongs to the SFTPD family. As to quaternary structure, oligomeric complex of 4 set of homotrimers. S-nitrosylation at Cys-34 and Cys-39 alters the quaternary structure which results in a pro-inflammatory chemoattractive signaling activity with macrophages.

Its subcellular location is the secreted. The protein localises to the extracellular space. It localises to the extracellular matrix. It is found in the surface film. Functionally, contributes to the lung's defense against inhaled microorganisms, organic antigens and toxins. Interacts with compounds such as bacterial lipopolysaccharides, oligosaccharides and fatty acids and modulates leukocyte action in immune response. May participate in the extracellular reorganization or turnover of pulmonary surfactant. Binds strongly maltose residues and to a lesser extent other alpha-glucosyl moieties. This chain is Pulmonary surfactant-associated protein D (Sftpd), found in Rattus norvegicus (Rat).